Reading from the N-terminus, the 327-residue chain is Urease accessory protein UreD (327 aa).

The protein belongs to the UreD family. In terms of assembly, ureD, UreF and UreG form a complex that acts as a GTP-hydrolysis-dependent molecular chaperone, activating the urease apoprotein by helping to assemble the nickel containing metallocenter of UreC. The UreE protein probably delivers the nickel.

It is found in the cytoplasm. Functionally, required for maturation of urease via the functional incorporation of the urease nickel metallocenter. This is Urease accessory protein UreD from Yersinia enterocolitica serotype O:8 / biotype 1B (strain NCTC 13174 / 8081).